The primary structure comprises 121 residues: Large ribosomal subunit protein uL18 (121 aa).

The protein belongs to the universal ribosomal protein uL18 family. As to quaternary structure, part of the 50S ribosomal subunit; part of the 5S rRNA/L5/L18/L25 subcomplex. Contacts the 5S and 23S rRNAs.

Its function is as follows. This is one of the proteins that bind and probably mediate the attachment of the 5S RNA into the large ribosomal subunit, where it forms part of the central protuberance. In Polaromonas naphthalenivorans (strain CJ2), this protein is Large ribosomal subunit protein uL18.